Reading from the N-terminus, the 224-residue chain is Germin-like protein 8-8 (224 aa).

Residues 1-22 form the signal peptide; that stretch reads MASPSFCLLAALLALVSWQAIA. Cys32 and Cys47 are oxidised to a cystine. The 151-residue stretch at 62–212 folds into the Cupin type-1 domain; the sequence is AMLDTPRKTN…AFQVEKGTID (151 aa). Asn76 is a glycosylation site (N-linked (GlcNAc...) asparagine). The Mn(2+) site is built by His109, His111, and Glu116. Asn135 is a glycosylation site (N-linked (GlcNAc...) asparagine). His157 is a binding site for Mn(2+).

Belongs to the germin family. Oligomer (believed to be a pentamer but probably hexamer).

Its subcellular location is the secreted. The protein resides in the extracellular space. The protein localises to the apoplast. Functionally, plays a role in broad-spectrum disease resistance. Probably has no oxalate oxidase activity even if the active site is conserved. This Oryza sativa subsp. japonica (Rice) protein is Germin-like protein 8-8.